Consider the following 227-residue polypeptide: Probable FKBP-type 25 kDa peptidyl-prolyl cis-trans isomerase (227 aa).

Residues Ala144 to Arg227 form the PPIase FKBP-type domain.

This sequence belongs to the FKBP-type PPIase family.

It catalyses the reaction [protein]-peptidylproline (omega=180) = [protein]-peptidylproline (omega=0). In terms of biological role, PPIases accelerate the folding of proteins. The protein is Probable FKBP-type 25 kDa peptidyl-prolyl cis-trans isomerase (fkl) of Pseudomonas aeruginosa (strain ATCC 15692 / DSM 22644 / CIP 104116 / JCM 14847 / LMG 12228 / 1C / PRS 101 / PAO1).